We begin with the raw amino-acid sequence, 92 residues long: UPF0223 protein SGO_1052 (92 aa).

This sequence belongs to the UPF0223 family.

This is UPF0223 protein SGO_1052 from Streptococcus gordonii (strain Challis / ATCC 35105 / BCRC 15272 / CH1 / DL1 / V288).